Here is a 150-residue protein sequence, read N- to C-terminus: Submaxillary gland androgen-regulated protein 2, isoform alpha (150 aa).

A signal peptide spans M1–C22.

The protein resides in the secreted. Functionally, may play a role in protection or detoxification. This is Submaxillary gland androgen-regulated protein 2, isoform alpha (Smr2) from Mus musculus (Mouse).